We begin with the raw amino-acid sequence, 160 residues long: Small ribosomal subunit protein uS9 (160 aa).

This sequence belongs to the universal ribosomal protein uS9 family.

In Xanthobacter autotrophicus (strain ATCC BAA-1158 / Py2), this protein is Small ribosomal subunit protein uS9.